We begin with the raw amino-acid sequence, 307 residues long: Tropinone reductase homolog At2g29340 (307 aa).

Leu-13–His-37 lines the NADP(+) pocket. Position 146 (Ser-146) interacts with substrate. Tyr-159 acts as the Proton acceptor in catalysis.

This sequence belongs to the short-chain dehydrogenases/reductases (SDR) family. SDR65C subfamily.

In Arabidopsis thaliana (Mouse-ear cress), this protein is Tropinone reductase homolog At2g29340.